Consider the following 91-residue polypeptide: Large ribosomal subunit protein uL23c (91 aa).

The protein belongs to the universal ribosomal protein uL23 family. As to quaternary structure, part of the 50S ribosomal subunit.

It localises to the plastid. The protein resides in the chloroplast. Binds to 23S rRNA. The protein is Large ribosomal subunit protein uL23c (rpl23) of Picea abies (Norway spruce).